A 215-amino-acid chain; its full sequence is Adenylate kinase (215 aa).

10–15 (GAGKGT) provides a ligand contact to ATP. The segment at 30-59 (STGDMLRAAVKAGTELGLKAKSVMDAGGLV) is NMP. AMP-binding positions include threonine 31, arginine 36, 57–59 (GLV), 85–88 (GFPR), and glutamine 92. The segment at 122-159 (GRRVHPASGRVYHTEYNPPKVAGKDDVSGEELVQREDD) is LID. ATP-binding positions include arginine 123 and 132-133 (VY). Arginine 156 and arginine 167 together coordinate AMP. Residue glycine 201 coordinates ATP.

It belongs to the adenylate kinase family. In terms of assembly, monomer.

The protein localises to the cytoplasm. It catalyses the reaction AMP + ATP = 2 ADP. It functions in the pathway purine metabolism; AMP biosynthesis via salvage pathway; AMP from ADP: step 1/1. Functionally, catalyzes the reversible transfer of the terminal phosphate group between ATP and AMP. Plays an important role in cellular energy homeostasis and in adenine nucleotide metabolism. The polypeptide is Adenylate kinase (Ectopseudomonas mendocina (strain ymp) (Pseudomonas mendocina)).